The primary structure comprises 519 residues: ATP synthase subunit alpha (519 aa).

Position 174 to 181 (174 to 181) interacts with ATP; sequence GDRQTGKT.

It belongs to the ATPase alpha/beta chains family. In terms of assembly, F-type ATPases have 2 components, CF(1) - the catalytic core - and CF(0) - the membrane proton channel. CF(1) has five subunits: alpha(3), beta(3), gamma(1), delta(1), epsilon(1). CF(0) has three main subunits: a(1), b(2) and c(9-12). The alpha and beta chains form an alternating ring which encloses part of the gamma chain. CF(1) is attached to CF(0) by a central stalk formed by the gamma and epsilon chains, while a peripheral stalk is formed by the delta and b chains.

The protein localises to the cell inner membrane. It catalyses the reaction ATP + H2O + 4 H(+)(in) = ADP + phosphate + 5 H(+)(out). In terms of biological role, produces ATP from ADP in the presence of a proton gradient across the membrane. The alpha chain is a regulatory subunit. This chain is ATP synthase subunit alpha, found in Acidovorax ebreus (strain TPSY) (Diaphorobacter sp. (strain TPSY)).